We begin with the raw amino-acid sequence, 414 residues long: 3-oxoacyl-[acyl-carrier-protein] synthase 2 (414 aa).

Residues 4 to 411 form the Ketosynthase family 3 (KS3) domain; it reads NKRVVITGMG…GHNAVLVFKK (408 aa). Catalysis depends on for beta-ketoacyl synthase activity residues Cys-165, His-304, and His-341.

Belongs to the thiolase-like superfamily. Beta-ketoacyl-ACP synthases family.

The enzyme catalyses a fatty acyl-[ACP] + malonyl-[ACP] + H(+) = a 3-oxoacyl-[ACP] + holo-[ACP] + CO2. It carries out the reaction (9Z)-hexadecenoyl-[ACP] + malonyl-[ACP] + H(+) = 3-oxo-(11Z)-octadecenoyl-[ACP] + holo-[ACP] + CO2. It participates in lipid metabolism; fatty acid biosynthesis. Its function is as follows. Involved in the type II fatty acid elongation cycle. Catalyzes the elongation of a wide range of acyl-ACP by the addition of two carbons from malonyl-ACP to an acyl acceptor. Can efficiently catalyze the conversion of palmitoleoyl-ACP (cis-hexadec-9-enoyl-ACP) to cis-vaccenoyl-ACP (cis-octadec-11-enoyl-ACP), an essential step in the thermal regulation of fatty acid composition. The sequence is that of 3-oxoacyl-[acyl-carrier-protein] synthase 2 (fabF) from Staphylococcus aureus (strain MW2).